Here is a 966-residue protein sequence, read N- to C-terminus: Receptor protein-tyrosine kinase CEPR1 (966 aa).

Residues Met1–Ser22 form the signal peptide. The Extracellular portion of the chain corresponds to Trp23–Ser592. N-linked (GlcNAc...) asparagine glycosylation occurs at Asn61. 20 LRR repeats span residues Gln70 to Tyr94, Phe95 to Asn120, Ser122 to Met144, Lys145 to Leu168, Asp170 to Leu194, Thr195 to Leu218, Thr219 to Leu242, Leu245 to Leu267, Lys268 to Leu291, Pro292 to Ser315, Thr317 to Ser339, Pro341 to Ser363, Lys365 to Ser386, Cys387 to Leu411, Pro412 to Ala435, Asn437 to Ser459, Thr460 to Leu483, Arg484 to Leu507, Lys508 to Leu531, and Pro533 to Gly554. Residues Asn109, Asn120, Asn128, and Asn167 are each glycosylated (N-linked (GlcNAc...) asparagine). N-linked (GlcNAc...) asparagine glycans are attached at residues Asn217 and Asn241. Residues Asn269 and Asn301 are each glycosylated (N-linked (GlcNAc...) asparagine). A glycan (N-linked (GlcNAc...) asparagine) is linked at Asn437. Residues Asn527 and Asn537 are each glycosylated (N-linked (GlcNAc...) asparagine). Residues Ser593–Leu613 form a helical membrane-spanning segment. The Cytoplasmic portion of the chain corresponds to Arg614–Leu966. One can recognise a Protein kinase domain in the interval Leu656–Ile934. ATP is bound by residues Val662–Val670 and Lys684. 2 positions are modified to phosphotyrosine: Tyr738 and Tyr775. Asp788 serves as the catalytic Proton acceptor. 2 positions are modified to phosphotyrosine: Tyr831 and Tyr838. The tract at residues Thr937–Leu966 is disordered.

This sequence belongs to the protein kinase superfamily. Ser/Thr protein kinase family. Interacts with the root-derived peptides CEP1, CEP3 and CEP5. As to expression, expressed in the vasculature, especially in phloem and procambium regions, of stems, leaves, cotyledons, sepals, pedals, pedicels, hypocotyls and roots (in primary and lateral roots, but not in root tips). Expressed in the root from the basal meristem onward. Present in the phloem pole pericycle and in the adjacent phloem.

The protein resides in the cell membrane. It catalyses the reaction L-tyrosyl-[protein] + ATP = O-phospho-L-tyrosyl-[protein] + ADP + H(+). Its function is as follows. Receptor kinase involved in the perception of C-terminally encoded plant signaling peptide (CEP) and subsequent regulation of root and shoot development. Required for xylem and phloem cell files morphology and organization, probably by preventing ectopic lignification in phloem cells. Together with CEPR2, mediates systemic nitrogen (N)-demand signaling upon the perception of root-derived peptides (e.g. CEP1) via the up-regulation of genes involved in N uptake and assimilation pathways. Positively regulates lateral root initiation and development; probably repressed by the signaling peptide CEP5. This Arabidopsis thaliana (Mouse-ear cress) protein is Receptor protein-tyrosine kinase CEPR1.